We begin with the raw amino-acid sequence, 132 residues long: Transcriptional repressor SmtB homolog (132 aa).

The Zn(2+) site is built by C20, H26, C71, C73, D114, H116, H127, and E130. One can recognise an HTH arsR-type domain in the interval 38 to 132; the sequence is MSLDQAQQMA…EVADHLQESD (95 aa). The H-T-H motif DNA-binding region spans 72 to 91; the sequence is VCDLAAAMKVSESAVSHQLR.

As to quaternary structure, homodimer.

Transcriptional repressor of the expression of the ziaA gene. Controls zinc homeostasis by triggering ZiaA-mediated efflux of excess zinc into the periplasm. This Synechocystis sp. (strain ATCC 27184 / PCC 6803 / Kazusa) protein is Transcriptional repressor SmtB homolog (ziaR).